A 126-amino-acid polypeptide reads, in one-letter code: MVSETTKTISVSNLIEEFENEQLKKELPEIYVGDTVKVGVRITEGNKERVQPYEGVVIAKRHGGIHQTITVRRIFQGIGVERVFMLHSPQVASLKVERRGKVRRAKLFYLRDRVGKATRVKQRFDR.

It belongs to the bacterial ribosomal protein bL19 family.

In terms of biological role, this protein is located at the 30S-50S ribosomal subunit interface and may play a role in the structure and function of the aminoacyl-tRNA binding site. The protein is Large ribosomal subunit protein bL19 of Prochlorococcus marinus (strain MIT 9312).